We begin with the raw amino-acid sequence, 535 residues long: Probable glucomannan 4-beta-mannosyltransferase 14 (535 aa).

A helical membrane pass occupies residues 42 to 62; the sequence is QVVSVLLFVDAAYMAIVVAIV. D131 is an active-site residue. Substrate-binding residues include D193 and D195. D287 is a catalytic residue. 4 helical membrane-spanning segments follow: residues 366–386, 403–423, 482–502, and 503–523; these read IVVH…TVIF, ITIL…YWIL, IMVG…GRTY, and LYVY…GYVG.

It belongs to the glycosyltransferase 2 family. Plant cellulose synthase-like A subfamily.

Its subcellular location is the golgi apparatus membrane. The enzyme catalyses GDP-mannose + (glucomannan)n = GDP + (glucomannan)n+1.. In terms of biological role, probable mannan synthase which consists of a 4-beta-mannosyltransferase activity on mannan using GDP-mannose. The beta-1,4-mannan product is the backbone for galactomannan synthesis by galactomannan galactosyltransferase. Galactomannan is a noncellulosic polysaccharides of plant cell wall. The sequence is that of Probable glucomannan 4-beta-mannosyltransferase 14 from Arabidopsis thaliana (Mouse-ear cress).